Here is a 728-residue protein sequence, read N- to C-terminus: Protein Hook homolog 1 (728 aa).

At methionine 1 the chain carries N-acetylmethionine. The sufficient for interaction with microtubules stretch occupies residues 1 to 555; it reads MEETQPPPQP…LKQKLEAHME (555 aa). Residues 12–128 form the Calponin-homology (CH) domain; sequence LPLCDSLMIW…RLLQLILGCA (117 aa). 2 coiled-coil regions span residues 169 to 434 and 477 to 658; these read PNDA…RCSQ and LRLQ…AKFR. Residues 169-444 are sufficient for homodimerization, interaction wit HOOK2, HOOK3 and AP4M1; the sequence is PNDAVGELEQ…VQQDHLNQTD (276 aa). Phosphoserine is present on serine 235. The tract at residues 481–512 is disordered; sequence QEGSENERIEELQEQLEQKHRKMNELETEQRL. Basic and acidic residues predominate over residues 503–512; it reads MNELETEQRL. Residues 657 to 728 form a sufficient for interaction with AKTIP and VPS18 region; the sequence is FRDYEEKLIV…SVKVPATTSD (72 aa). At threonine 699 the chain carries Phosphothreonine. Phosphoserine is present on residues serine 719 and serine 727.

This sequence belongs to the hook family. In terms of assembly, self-associates. Component of the FTS/Hook/FHIP complex (FHF complex), composed of AKTIP/FTS, FHIP1B, and one or more members of the Hook family of proteins HOOK1, HOOK2, and HOOK3. Interacts directly with AKTIP/FTS, HOOK2 and HOOK3. Associates with several subunits of the homotypic vesicular sorting complex (the HOPS complex) including VPS16, VPS18, VPS39 and VPS41; these interactions may be indirect. Interacts with CCDC181. Interacts (via coiled-coil region) with RIMBP3 (via C-terminus). Interacts with LRGUK (via guanylate kinase-like domain). Interacts with microtubules. May interact with CLN3. Interacts with AP4M1; the interaction is direct, mediates the interaction between FTS-Hook-FHIP (FHF) complex and AP-4 and the perinuclear distribution of AP-4.

It localises to the cytoplasm. The protein resides in the cytoskeleton. Functionally, component of the FTS/Hook/FHIP complex (FHF complex). The FHF complex may function to promote vesicle trafficking and/or fusion via the homotypic vesicular protein sorting complex (the HOPS complex). FHF complex promotes the distribution of AP-4 complex to the perinuclear area of the cell. Required for spermatid differentiation. Probably involved in the positioning of the microtubules of the manchette and the flagellum in relation to the membrane skeleton. The polypeptide is Protein Hook homolog 1 (Homo sapiens (Human)).